The chain runs to 875 residues: cGMP-specific 3',5'-cyclic phosphodiesterase (875 aa).

Disordered regions lie at residues 1–29 and 78–102; these read MERA…DQDS and SCSC…RKIS. The segment covering 10–22 has biased composition (low complexity); it reads QQRQQQQPQQQKQ. Polar residues predominate over residues 78–101; that stretch reads SCSCPLQQSPRADNSAPGTPTRKI. Position 102 is a phosphoserine (S102). GAF domains follow at residues 164 to 314 and 346 to 503; these read DVTA…GIVL and SLEV…GLGI. Positions 536–860 constitute a PDEase domain; the sequence is ETRELQSLAA…QKWQALAEQQ (325 aa). Catalysis depends on H613, which acts as the Proton donor. Zn(2+) contacts are provided by H617, H653, D654, and D764. D654 provides a ligand contact to Mg(2+). Residue Q817 participates in 3',5'-cyclic GMP binding.

It belongs to the cyclic nucleotide phosphodiesterase family. It depends on Zn(2+) as a cofactor. Mg(2+) serves as cofactor. Phosphorylation is regulated by binding of cGMP to the two allosteric sites. Phosphorylation by PRKG1 leads to its activation. In terms of tissue distribution, expressed in aortic smooth muscle cells, heart, placenta, skeletal muscle and pancreas and, to a much lesser extent, in brain, liver and lung.

It catalyses the reaction 3',5'-cyclic GMP + H2O = GMP + H(+). Its pathway is purine metabolism; 3',5'-cyclic GMP degradation; GMP from 3',5'-cyclic GMP: step 1/1. Its activity is regulated as follows. Sildenafil (Viagra) is a highly selective and potent inhibitor of PDE5A and is effective in the treatment of penile erectile dysfunction. Also inhibited by zaprinast. Its function is as follows. Plays a role in signal transduction by regulating the intracellular concentration of cyclic nucleotides. This phosphodiesterase catalyzes the specific hydrolysis of cGMP to 5'-GMP. Specifically regulates nitric-oxide-generated cGMP. The polypeptide is cGMP-specific 3',5'-cyclic phosphodiesterase (Homo sapiens (Human)).